A 256-amino-acid chain; its full sequence is Pimeloyl-[acyl-carrier protein] methyl ester esterase (256 aa).

In terms of domain architecture, AB hydrolase-1 spans 15–242 (HLVLLHGWGL…AAHAPFISHP (228 aa)). Residues W22, 82–83 (SL), and 143–147 (FLALQ) each bind substrate. S82 serves as the catalytic Nucleophile. Residues D207 and H235 contribute to the active site. H235 contacts substrate.

This sequence belongs to the AB hydrolase superfamily. Carboxylesterase BioH family. As to quaternary structure, monomer.

The protein resides in the cytoplasm. It carries out the reaction 6-carboxyhexanoyl-[ACP] methyl ester + H2O = 6-carboxyhexanoyl-[ACP] + methanol + H(+). The protein operates within cofactor biosynthesis; biotin biosynthesis. The physiological role of BioH is to remove the methyl group introduced by BioC when the pimeloyl moiety is complete. It allows to synthesize pimeloyl-ACP via the fatty acid synthetic pathway through the hydrolysis of the ester bonds of pimeloyl-ACP esters. This Salmonella newport (strain SL254) protein is Pimeloyl-[acyl-carrier protein] methyl ester esterase.